The sequence spans 298 residues: Protoheme IX farnesyltransferase (298 aa).

The next 9 helical transmembrane spans lie at 26 to 46 (VVSLIVFTAVIGMFLSVPGVV), 52 to 72 (IFATVGIAFVAGAAAAVNCLV), 99 to 119 (FVFLALVGGAGLLILHQLVNP), 120 to 140 (LTMWLTLGTFVGYAIIYTVIL), 148 to 168 (IVIGGASGAMPPVLGWAAVTG), 174 to 194 (ALLLFLIIFAWTPPHFWALAL), 219 to 239 (LHVLLYTLILIAVTLMPYATQ), 241 to 261 (SGLIYLAGAIVLDVIFLYYAV), and 276 to 296 (FRYSILYLAGLFAVLLVDHYI).

The protein belongs to the UbiA prenyltransferase family. Protoheme IX farnesyltransferase subfamily.

The protein localises to the cell inner membrane. It carries out the reaction heme b + (2E,6E)-farnesyl diphosphate + H2O = Fe(II)-heme o + diphosphate. It functions in the pathway porphyrin-containing compound metabolism; heme O biosynthesis; heme O from protoheme: step 1/1. In terms of biological role, converts heme B (protoheme IX) to heme O by substitution of the vinyl group on carbon 2 of heme B porphyrin ring with a hydroxyethyl farnesyl side group. The chain is Protoheme IX farnesyltransferase from Nitrosospira multiformis (strain ATCC 25196 / NCIMB 11849 / C 71).